The primary structure comprises 43 residues: Snaclec lebecetin subunit beta (43 aa).

The C-type lectin domain maps to 1–43 (ALNCASGWSGGYDQHCYKVFDIPPSWAADEKFCKQQTSGGHLV). Cysteine 4 and cysteine 16 are joined by a disulfide.

As to quaternary structure, heterodimer of subunits alpha and beta; disulfide-linked. It depends on Ca(2+) as a cofactor. Post-translationally, glycosylated. Expressed by the venom gland.

The protein localises to the secreted. Its function is as follows. Binds to the platelet GPIb/IX/V receptor system and inhibits ristocetin-induced platelet aggregation in human platelet-rich plasma. Strongly inhibits platelet aggregation induced by ADP, calcium ionophore, thrombin and collagen. Does not inhibit U46619-induced platelet aggregation. The protein is Snaclec lebecetin subunit beta of Macrovipera lebetinus (Levantine viper).